Reading from the N-terminus, the 313-residue chain is Methionyl-tRNA formyltransferase (313 aa).

112–115 contributes to the (6S)-5,6,7,8-tetrahydrofolate binding site; sequence SLLP.

Belongs to the Fmt family.

The enzyme catalyses L-methionyl-tRNA(fMet) + (6R)-10-formyltetrahydrofolate = N-formyl-L-methionyl-tRNA(fMet) + (6S)-5,6,7,8-tetrahydrofolate + H(+). Functionally, attaches a formyl group to the free amino group of methionyl-tRNA(fMet). The formyl group appears to play a dual role in the initiator identity of N-formylmethionyl-tRNA by promoting its recognition by IF2 and preventing the misappropriation of this tRNA by the elongation apparatus. This is Methionyl-tRNA formyltransferase from Roseiflexus castenholzii (strain DSM 13941 / HLO8).